A 347-amino-acid polypeptide reads, in one-letter code: Transcription factor JunB (347 aa).

Residues lysine 4, lysine 33, and lysine 36 each participate in a glycyl lysine isopeptide (Lys-Gly) (interchain with G-Cter in SUMO2) cross-link. Positions 50-77 (LKAPGARGPGPEGNGGGSYFSSQGSDTG) are disordered. Gly residues predominate over residues 56-67 (RGPGPEGNGGGS). Polar residues predominate over residues 68-77 (YFSSQGSDTG). Residue lysine 81 forms a Glycyl lysine isopeptide (Lys-Gly) (interchain with G-Cter in SUMO2) linkage. A phosphothreonine mark is found at threonine 102 and threonine 104. Serine 117 carries the post-translational modification Phosphoserine. Lysine 141 is covalently cross-linked (Glycyl lysine isopeptide (Lys-Gly) (interchain with G-Cter in SUMO2)). Lysine 240 is subject to N6-acetyllysine; alternate. A Glycyl lysine isopeptide (Lys-Gly) (interchain with G-Cter in SUMO1); alternate cross-link involves residue lysine 240. Lysine 240 is covalently cross-linked (Glycyl lysine isopeptide (Lys-Gly) (interchain with G-Cter in SUMO2); alternate). The segment covering 241 to 253 (EEPQTVPEARSRD) has biased composition (basic and acidic residues). The interval 241 to 260 (EEPQTVPEARSRDATPPVSP) is disordered. Phosphoserine is present on serine 251. Threonine 255 carries the phosphothreonine modification. At serine 259 the chain carries Phosphoserine. The basic motif stretch occupies residues 268–295 (RIKVERKRLRNRLAATKCRKRKLERIAR). The bZIP domain maps to 268-331 (RIKVERKRLR…AQLKQKVMTH (64 aa)). The segment at 296-324 (LEDKVKTLKAENAGLSSTAGLLREQVAQL) is leucine-zipper. A Glycyl lysine isopeptide (Lys-Gly) (interchain with G-Cter in SUMO2) cross-link involves residue lysine 343.

Belongs to the bZIP family. Jun subfamily. Binds DNA as a homodimer or as a heterodimer with another member of the Jun/Fos family. Component of an AP-1 transcription factor complex composed of JUN-FOS heterodimers. As part of the AP-1 transcription factor complex, forms heterodimers with FOSB, thereby binding to the AP-1 consensus sequence and stimulating transcription. Interacts with ITCH (via its WW domains). In terms of processing, ubiquitinated by ITCH, leading to its degradation.

Its subcellular location is the nucleus. Functionally, transcription factor involved in regulating gene activity following the primary growth factor response. Binds to the DNA sequence 5'-TGA[GC]TCA-3'. Heterodimerizes with proteins of the FOS family to form an AP-1 transcription complex, thereby enhancing its DNA binding activity to an AP-1 consensus sequence and its transcriptional activity. The chain is Transcription factor JunB (JUNB) from Bos taurus (Bovine).